The sequence spans 479 residues: GTPase Obg (479 aa).

Residues 2-159 enclose the Obg domain; that stretch reads PRFVDRVVIH…RDLTLELKTV (158 aa). Positions 160-340 constitute an OBG-type G domain; the sequence is ADVGLVGFPS…LIFGLSQMIS (181 aa). GTP contacts are provided by residues 166-173, 191-195, 212-215, 292-295, and 321-323; these read GFPSAGKS, FTTLV, DVPG, NKID, and STA. Mg(2+) contacts are provided by S173 and T193. One can recognise an OCT domain in the interval 358–436; that stretch reads PIPVDDSGFT…IGEMTFDWEP (79 aa). A disordered region spans residues 434-479; it reads WEPQTPAGEPVAMSGRGTDPRLDSNKRVGAAERKAARSRRREHGDG. Residues 451–468 are compositionally biased toward basic and acidic residues; the sequence is TDPRLDSNKRVGAAERKA. A compositionally biased stretch (basic residues) spans 469-479; it reads ARSRRREHGDG.

Belongs to the TRAFAC class OBG-HflX-like GTPase superfamily. OBG GTPase family. As to quaternary structure, monomer. The cofactor is Mg(2+).

It localises to the cytoplasm. Functionally, an essential GTPase which binds GTP, GDP and possibly (p)ppGpp with moderate affinity, with high nucleotide exchange rates and a fairly low GTP hydrolysis rate. Plays a role in control of the cell cycle, stress response, ribosome biogenesis and in those bacteria that undergo differentiation, in morphogenesis control. In Mycobacterium tuberculosis (strain ATCC 25177 / H37Ra), this protein is GTPase Obg.